We begin with the raw amino-acid sequence, 876 residues long: MEMKPKYDPREVEAGRYEEWVKNGYFKPSEDKSKETYTIVIPPPNVTGKLHLGHAWDTTLQDIITRMKRMQGYDTLYLPGMDHAGIATQAKVEAKLNEKGITRYDLGREKFLEQAWDWKEEYASFIRAQWAKLGLGLDYSRERFTLDEGLSKAVKKVFVDLYNKGIIYRGERIINWDPKARTALSDIEVIHEDVQGAFYHFKYPYADGEGFIEIATTRPETMLGDTAIVVNPNDERYKDVIGKTVILPIVGRELPILADEYVDIDFGSGAMKVTPAHDLNDFEIGQRHQLENIIVMDENGKMNDKAGKYEGMDRFDCRKQLVEDLKEQDLVIKIEDHVHSVGHSERSGAVVEPYLSTQWFVRMEDLAKRSLDNQKTDDRIDFYPQRFEHTFNQWMENIRDWTISRQLWWGHQIPAWYHKETGEIYVGEEAPTDIENWQQDEDVLDTWFSSALWPFSTLGWPDLESEDFKRYYPTNALVTGYDIIFFWVARMIFQGLEFTDRRPFNDVLLHGLVRAEDGRKMSKSLGNGVDPMDVIDEYGADSLRYFLATGSSPGHDLRYSTEKVESVWNFINKIWNGARFSLMNIGEDFKVEDIDLSGNLSLADKWILTRLNETIATVTDLSDKYEFGEVGRALYNFIWDDFCDWYIEMSKIPMNGNDEEQKQITRSVLSYTLDNIMRMLHPFMPFVTEKIWQSLPHEGDTIVKASWPEVRESLIFEESKQTMQQLVEIIKSVRQSRVEVNTPLSKEIPILIQAKDKEIETTLSQNKDYLIKFCNPSTLNISTDVEIPEKAMTSVVIAGKVVLPLEGLIDMDKEISRLEKELAKLQSELDRVDKKLSNENFVSKAPEKVINEEKRKKQDYQEKYDGVKARIEQLKA.

The short motif at 44–54 is the 'HIGH' region element; sequence PNVTGKLHLGH. Positions 520–524 match the 'KMSKS' region motif; the sequence is KMSKS. Lys523 contributes to the ATP binding site. Residues 805–876 are a coiled coil; the sequence is LEGLIDMDKE…VKARIEQLKA (72 aa).

The protein belongs to the class-I aminoacyl-tRNA synthetase family. ValS type 1 subfamily. In terms of assembly, monomer.

Its subcellular location is the cytoplasm. The catalysed reaction is tRNA(Val) + L-valine + ATP = L-valyl-tRNA(Val) + AMP + diphosphate. Catalyzes the attachment of valine to tRNA(Val). As ValRS can inadvertently accommodate and process structurally similar amino acids such as threonine, to avoid such errors, it has a 'posttransfer' editing activity that hydrolyzes mischarged Thr-tRNA(Val) in a tRNA-dependent manner. The protein is Valine--tRNA ligase of Staphylococcus aureus (strain bovine RF122 / ET3-1).